A 434-amino-acid chain; its full sequence is Alpha-enolase (434 aa).

A Mg(2+)-binding site is contributed by Ser-40. Substrate is bound by residues His-158 and Glu-167. Catalysis depends on Glu-210, which acts as the Proton donor. Residues Asp-245, Glu-293, and Asp-318 each contribute to the Mg(2+) site. Substrate contacts are provided by Glu-293 and Asp-318. Residue Lys-343 is the Proton acceptor of the active site. Residues 370 to 373 (SHRS) and Lys-394 contribute to the substrate site.

Belongs to the enolase family. As to quaternary structure, homodimer. Mg(2+) serves as cofactor.

Its subcellular location is the cytoplasm. The enzyme catalyses (2R)-2-phosphoglycerate = phosphoenolpyruvate + H2O. Its pathway is carbohydrate degradation; glycolysis; pyruvate from D-glyceraldehyde 3-phosphate: step 4/5. In Gallus gallus (Chicken), this protein is Alpha-enolase (ENO1).